The primary structure comprises 225 residues: Ribonuclease 3 (225 aa).

The RNase III domain maps to 5 to 127 (IEKLTRQLGY…IIGAVYLDSD (123 aa)). Glu-40 provides a ligand contact to Mg(2+). Asp-44 is a catalytic residue. Residues Asp-113 and Glu-116 each contribute to the Mg(2+) site. The active site involves Glu-116. In terms of domain architecture, DRBM spans 154–224 (DPKTRLQEFL…AELALEQLTN (71 aa)).

It belongs to the ribonuclease III family. In terms of assembly, homodimer. The cofactor is Mg(2+).

The protein localises to the cytoplasm. It catalyses the reaction Endonucleolytic cleavage to 5'-phosphomonoester.. In terms of biological role, digests double-stranded RNA. Involved in the processing of primary rRNA transcript to yield the immediate precursors to the large and small rRNAs (23S and 16S). Processes some mRNAs, and tRNAs when they are encoded in the rRNA operon. Processes pre-crRNA and tracrRNA of type II CRISPR loci if present in the organism. This chain is Ribonuclease 3, found in Vibrio vulnificus (strain CMCP6).